The sequence spans 329 residues: MQGSVTEFLKPRLVDIEQVSSTHAKVTLEPLERGFGHTLGNALRRILLSSMPGCAVTEVEIDGVLHEYSTKEGVQEDILEILLNLKGLAVRVQGKDEVILTLNKSGIGPVTAADITHDGDVEIVKPQHVICHLTDENASISMRIKVQRGRGYVPASTRIHSEEDERPIGRLLVDACYSPVERIAYNVEAARVEQRTDLDKLVIEMETNGTIDPEEAIRRAATILAEQLEAFVDLRDVRQPEVKEEKPEFDPILLRPVDDLELTVRSANCLKAEAIHYIGDLVQRTEVELLKTPNLGKKSLTEIKDVLASRGLSLGMRLENWPPASIADE.

The alpha N-terminal domain (alpha-NTD) stretch occupies residues 1–235 (MQGSVTEFLK…EQLEAFVDLR (235 aa)). Residues 249–329 (FDPILLRPVD…NWPPASIADE (81 aa)) are alpha C-terminal domain (alpha-CTD).

It belongs to the RNA polymerase alpha chain family. As to quaternary structure, homodimer. The RNAP catalytic core consists of 2 alpha, 1 beta, 1 beta' and 1 omega subunit. When a sigma factor is associated with the core the holoenzyme is formed, which can initiate transcription.

It catalyses the reaction RNA(n) + a ribonucleoside 5'-triphosphate = RNA(n+1) + diphosphate. In terms of biological role, DNA-dependent RNA polymerase catalyzes the transcription of DNA into RNA using the four ribonucleoside triphosphates as substrates. The polypeptide is DNA-directed RNA polymerase subunit alpha (Shigella flexneri serotype 5b (strain 8401)).